The chain runs to 258 residues: UPF0246 protein IL2146 (258 aa).

It belongs to the UPF0246 family.

In Idiomarina loihiensis (strain ATCC BAA-735 / DSM 15497 / L2-TR), this protein is UPF0246 protein IL2146.